Reading from the N-terminus, the 406-residue chain is Argininosuccinate synthase (406 aa).

Residues 13-21 (AYSGGLDTS) and Ala40 each bind ATP. L-citrulline-binding residues include Tyr91 and Ser96. Residue Gly121 participates in ATP binding. 3 residues coordinate L-aspartate: Thr123, Asn127, and Asp128. Position 127 (Asn127) interacts with L-citrulline. Positions 131, 182, 191, 267, and 279 each coordinate L-citrulline.

The protein belongs to the argininosuccinate synthase family. Type 1 subfamily. Homotetramer.

The protein resides in the cytoplasm. It catalyses the reaction L-citrulline + L-aspartate + ATP = 2-(N(omega)-L-arginino)succinate + AMP + diphosphate + H(+). Its pathway is amino-acid biosynthesis; L-arginine biosynthesis; L-arginine from L-ornithine and carbamoyl phosphate: step 2/3. The protein is Argininosuccinate synthase of Brucella suis biovar 1 (strain 1330).